Reading from the N-terminus, the 625-residue chain is MKYTSAATKPGVFPEHHQHAMMRNRYHPHHCNYSDNRSAIDIIAELGSESNAHGLAKIVTSRDTKRKVIWALLVIAGFTAATLQLSLLVRKYLQFQVVELSEIKDSMPVQYPSVSICNIEPISLRTIRRMYFNNESQNLITWLRFIQKFRFEQDSFMNSIRAFYENLGQDAKKLSHNLEDMLMHCRFNRELCHVSNFSTFFDGNYFNCFTFNSGQRLQMHATGPENGLSLIFSVEKDDPLPGTYGVYNFDNNILHSAGVRVVVHAPGSMPSPVDHGIDIPPGYSSSVGLKAILHTRLPYPYGNCTNDMLNGIKQYKYTFFACLQLCKQRLIIQRCGCKSSALPEVPSYNATFCGVIKDWQEINRNHSNEDHNQSEEDRAFIPTPYLACEEREQKNLNNDRTYELSCGCFQPCSETSYLKSVSLSYWPLEFYQLSAVERFFKQERQAGQNHFMKTAYEYLEKLAHPSQKHLARNDSHMDDILSKSYSLSEKEMAKEASDLIRQNMLRLNIYLEDLSVVEYRQLPAYGLADLFADIGGTLGLWMGISVLTIMELIELVIRLTGLVFNSEKGLPRGPTTVNNNNGSNNHSQSTSQHQLYNGYMDHDSHYSDSAGASVFDFRRGVESPV.

The Cytoplasmic portion of the chain corresponds to 1-67; that stretch reads MKYTSAATKP…IVTSRDTKRK (67 aa). The chain crosses the membrane as a helical span at residues 68-89; the sequence is VIWALLVIAGFTAATLQLSLLV. Over 90–536 the chain is Extracellular; the sequence is RKYLQFQVVE…LADLFADIGG (447 aa). Residues Asn134, Asn196, Asn303, Asn349, Asn365, Asn372, and Asn473 are each glycosylated (N-linked (GlcNAc...) asparagine). A helical transmembrane segment spans residues 537 to 557; that stretch reads TLGLWMGISVLTIMELIELVI. The Cytoplasmic portion of the chain corresponds to 558-625; sequence RLTGLVFNSE…DFRRGVESPV (68 aa). Positions 570 to 591 are disordered; that stretch reads LPRGPTTVNNNNGSNNHSQSTS. Over residues 575 to 591 the composition is skewed to low complexity; sequence TTVNNNNGSNNHSQSTS.

The protein belongs to the amiloride-sensitive sodium channel (TC 1.A.6) family. As to expression, muscle and nervous tissue.

It localises to the membrane. In terms of biological role, FMRFamide-gated ionotropic receptor. The protein is FMRFamide-activated amiloride-sensitive sodium channel of Cornu aspersum (Brown garden snail).